Here is an 80-residue protein sequence, read N- to C-terminus: Acyl carrier protein (80 aa).

The 76-residue stretch at 4–79 (EAILEKVRSI…DAVKYIEDKQ (76 aa)) folds into the Carrier domain. Ser39 carries the post-translational modification O-(pantetheine 4'-phosphoryl)serine.

Belongs to the acyl carrier protein (ACP) family. 4'-phosphopantetheine is transferred from CoA to a specific serine of apo-ACP by AcpS. This modification is essential for activity because fatty acids are bound in thioester linkage to the sulfhydryl of the prosthetic group.

It is found in the cytoplasm. Its pathway is lipid metabolism; fatty acid biosynthesis. Carrier of the growing fatty acid chain in fatty acid biosynthesis. This is Acyl carrier protein from Prochlorococcus marinus (strain SARG / CCMP1375 / SS120).